The sequence spans 245 residues: Actin-like protein 10 (245 aa).

It belongs to the actin family.

In Homo sapiens (Human), this protein is Actin-like protein 10 (ACTL10).